Consider the following 490-residue polypeptide: ATP synthase subunit beta, chloroplastic (490 aa).

Residue 170 to 177 (GGXGVGKT) coordinates ATP.

The protein belongs to the ATPase alpha/beta chains family. F-type ATPases have 2 components, CF(1) - the catalytic core - and CF(0) - the membrane proton channel. CF(1) has five subunits: alpha(3), beta(3), gamma(1), delta(1), epsilon(1). CF(0) has four main subunits: a(1), b(1), b'(1) and c(9-12).

Its subcellular location is the plastid. The protein localises to the chloroplast thylakoid membrane. It carries out the reaction ATP + H2O + 4 H(+)(in) = ADP + phosphate + 5 H(+)(out). Produces ATP from ADP in the presence of a proton gradient across the membrane. The catalytic sites are hosted primarily by the beta subunits. In Ipomoea coccinea (Scarlet morning-glory), this protein is ATP synthase subunit beta, chloroplastic.